Reading from the N-terminus, the 336-residue chain is Atypical chemokine receptor 1 (336 aa).

Residues 1–63 (MGNCLHTAEL…CNLLDDSALP (63 aa)) are Extracellular-facing. Residues asparagine 16, asparagine 27, and asparagine 33 are each glycosylated (N-linked (GlcNAc...) asparagine). Intrachain disulfides connect cysteine 51-cysteine 276 and cysteine 129-cysteine 195. The helical transmembrane segment at 64–84 (FFILTSVLGILASSTVLFILF) threads the bilayer. The Cytoplasmic segment spans residues 85-95 (RPLFRWQLCPG). The chain crosses the membrane as a helical span at residues 96–116 (WPVLAQLAVGSALFSIVVPIL). At 117-129 (APGLGSTHSSALC) the chain is on the extracellular side. A helical membrane pass occupies residues 130–153 (SLGYCVWYGSAFAQALLLGCHASL). At 154–166 (GHRLGAGQVPGLT) the chain is on the cytoplasmic side. The chain crosses the membrane as a helical span at residues 167 to 187 (LGLTVGIWGVAALLTLPVTLA). The Extracellular segment spans residues 188–207 (SGASGGLCTPIHSTELKALQ). Residues 208 to 228 (ATHTVACLAIFVLLPLGLFGA) form a helical membrane-spanning segment. Over 229-244 (KGLKKALGMGPGPWMN) the chain is Cytoplasmic. Residues 245–265 (ILWAWFIFWWPHGVVLGLDFL) traverse the membrane as a helical segment. Over 266 to 287 (VRSKLLLLSTCLAQQALDLLLN) the chain is Extracellular. The helical transmembrane segment at 288 to 308 (LAEALAILHCVATPLILALFY) threads the bilayer. Residues 309–336 (HQATRTLLPSLPLPEGWSSHLDTLGSKS) are Cytoplasmic-facing.

This sequence belongs to the G-protein coupled receptor 1 family. Atypical chemokine receptor subfamily.

Its subcellular location is the early endosome. It localises to the recycling endosome. The protein localises to the membrane. Functionally, atypical chemokine receptor that controls chemokine levels and localization via high-affinity chemokine binding that is uncoupled from classic ligand-driven signal transduction cascades, resulting instead in chemokine sequestration, degradation, or transcytosis. Also known as interceptor (internalizing receptor) or chemokine-scavenging receptor or chemokine decoy receptor. Has a promiscuous chemokine-binding profile, interacting with inflammatory chemokines of both the CXC and the CC subfamilies but not with homeostatic chemokines. Acts as a receptor for chemokines including CCL2, CCL5, CCL7, CCL11, CCL13, CCL14, CCL17, CXCL5, CXCL6, IL8/CXCL8, CXCL11, GRO, RANTES, MCP-1 and TARC. May regulate chemokine bioavailability and, consequently, leukocyte recruitment through two distinct mechanisms: when expressed in endothelial cells, it sustains the abluminal to luminal transcytosis of tissue-derived chemokines and their subsequent presentation to circulating leukocytes; when expressed in erythrocytes, serves as blood reservoir of cognate chemokines but also as a chemokine sink, buffering potential surges in plasma chemokine levels. This chain is Atypical chemokine receptor 1 (ACKR1), found in Gorilla gorilla gorilla (Western lowland gorilla).